A 762-amino-acid polypeptide reads, in one-letter code: ATP-dependent RNA helicase DBP10 (762 aa).

Disordered regions lie at residues 20–50 and 65–88; these read SLFA…LLDN and KQQR…SGGF. Low complexity predominate over residues 41 to 50; it reads DLDFGDLLDN. Residues 66 to 80 are compositionally biased toward polar residues; the sequence is QQRSSNRKTGSLQSK. The Q motif motif lies at 86–114; that stretch reads GGFQAMGLNSNLLRAISRKGFSVPTPIQR. The Helicase ATP-binding domain maps to 117–289; the sequence is IPLVLERRDV…RAGLQEPSLI (173 aa). 130–137 contributes to the ATP binding site; that stretch reads ARTGSGKT. The short motif at 237 to 240 is the DEAD box element; sequence DEAD. Disordered stretches follow at residues 333–363, 491–523, and 671–762; these read EGIE…PTEH, MNQP…EESE, and VRNF…RAKR. Residues 334 to 511 enclose the Helicase C-terminal domain; that stretch reads GIEEETDEQQ…SSPEKTNPPG (178 aa). Residues 349–362 are compositionally biased toward basic and acidic residues; the sequence is RDSERRNRKEKPTE. Residues 511–523 are compositionally biased toward acidic residues; sequence GDDEEAWEDEESE. Over residues 675 to 684 the composition is skewed to gly residues; that stretch reads SGGGPGGAGA. Over residues 692 to 754 the composition is skewed to basic and acidic residues; it reads EKAPKDADKF…VQEQKREKNA (63 aa).

The protein belongs to the DEAD box helicase family. DDX54/DBP10 subfamily.

It localises to the nucleus. The protein localises to the nucleolus. It catalyses the reaction ATP + H2O = ADP + phosphate + H(+). Functionally, ATP-binding RNA helicase involved in the biogenesis of 60S ribosomal subunits and is required for the normal formation of 25S and 5.8S rRNAs. In Chaetomium globosum (strain ATCC 6205 / CBS 148.51 / DSM 1962 / NBRC 6347 / NRRL 1970) (Soil fungus), this protein is ATP-dependent RNA helicase DBP10 (DBP10).